The chain runs to 234 residues: Adenosine 5'-phosphosulfate reductase (234 aa).

[4Fe-4S] cluster is bound by residues Cys-120, Cys-121, Cys-203, and Cys-206. The active-site Nucleophile; cysteine thiosulfonate intermediate is the Cys-229.

Belongs to the PAPS reductase family. CysH subfamily. [4Fe-4S] cluster serves as cofactor.

It localises to the cytoplasm. It carries out the reaction [thioredoxin]-disulfide + sulfite + AMP + 2 H(+) = adenosine 5'-phosphosulfate + [thioredoxin]-dithiol. The protein operates within sulfur metabolism; hydrogen sulfide biosynthesis; sulfite from sulfate. In terms of biological role, catalyzes the formation of sulfite from adenosine 5'-phosphosulfate (APS) using thioredoxin as an electron donor. In Bacillus cereus (strain ZK / E33L), this protein is Adenosine 5'-phosphosulfate reductase.